The primary structure comprises 156 residues: uncharacterized protein (156 aa).

This is an uncharacterized protein from Staphylococcus aureus (strain MW2).